The chain runs to 439 residues: Xylose isomerase (439 aa).

Active-site residues include His99 and Asp102. Residues Glu230, Glu266, His269, Asp294, Asp305, Asp307, and Asp337 each coordinate Mg(2+).

It belongs to the xylose isomerase family. As to quaternary structure, homotetramer. Mg(2+) is required as a cofactor.

It localises to the cytoplasm. The catalysed reaction is alpha-D-xylose = alpha-D-xylulofuranose. The chain is Xylose isomerase from Oceanobacillus iheyensis (strain DSM 14371 / CIP 107618 / JCM 11309 / KCTC 3954 / HTE831).